Consider the following 152-residue polypeptide: D-aminoacyl-tRNA deacylase (152 aa).

A Gly-cisPro motif, important for rejection of L-amino acids motif is present at residues 142-143; that stretch reads GP.

Belongs to the DTD family. Homodimer.

Its subcellular location is the cytoplasm. The enzyme catalyses glycyl-tRNA(Ala) + H2O = tRNA(Ala) + glycine + H(+). The catalysed reaction is a D-aminoacyl-tRNA + H2O = a tRNA + a D-alpha-amino acid + H(+). Functionally, an aminoacyl-tRNA editing enzyme that deacylates mischarged D-aminoacyl-tRNAs. Also deacylates mischarged glycyl-tRNA(Ala), protecting cells against glycine mischarging by AlaRS. Acts via tRNA-based rather than protein-based catalysis; rejects L-amino acids rather than detecting D-amino acids in the active site. By recycling D-aminoacyl-tRNA to D-amino acids and free tRNA molecules, this enzyme counteracts the toxicity associated with the formation of D-aminoacyl-tRNA entities in vivo and helps enforce protein L-homochirality. The polypeptide is D-aminoacyl-tRNA deacylase (Burkholderia cenocepacia (strain ATCC BAA-245 / DSM 16553 / LMG 16656 / NCTC 13227 / J2315 / CF5610) (Burkholderia cepacia (strain J2315))).